The chain runs to 305 residues: Mat- sexual cell fertilization-promoting factor (305 aa).

The alpha box DNA-binding region spans 38-93; the sequence is PAKKKVNGFMGYRSYYSSMFSQLPQKERSPILTTLWQQDPFHKEWDFMCAVYSAIR.

It belongs to the MATALPHA1 family.

It localises to the nucleus. Its function is as follows. Controls fertilization, probably by determining the mating type. May be involved in the post-fertilization steps of the sexual cycle besides mat+. It is required for the developmental events that occur in the female organ after fertilization. In Podospora anserina (Pleurage anserina), this protein is Mat- sexual cell fertilization-promoting factor (FMR1).